Here is a 509-residue protein sequence, read N- to C-terminus: Photosystem II CP47 reaction center protein (509 aa).

6 helical membrane passes run 21–36 (AVHMMHTALVAGWAGS), 101–115 (IVFSGLCFLAAIWHW), 140–156 (GIHLFLSGVACFGFGAF), 203–218 (IAAGTLGILAGLFHLS), 237–253 (VLSSSSIAAVFFAAFVV), and 458–473 (SFALLFFFGHIWHGSR).

Belongs to the PsbB/PsbC family. PsbB subfamily. As to quaternary structure, PSII is composed of 1 copy each of membrane proteins PsbA, PsbB, PsbC, PsbD, PsbE, PsbF, PsbH, PsbI, PsbJ, PsbK, PsbL, PsbM, PsbT, PsbX, PsbY, PsbZ, Psb30/Ycf12, at least 3 peripheral proteins of the oxygen-evolving complex and a large number of cofactors. It forms dimeric complexes. The cofactor is Binds multiple chlorophylls. PSII binds additional chlorophylls, carotenoids and specific lipids..

The protein localises to the plastid. It is found in the chloroplast thylakoid membrane. Functionally, one of the components of the core complex of photosystem II (PSII). It binds chlorophyll and helps catalyze the primary light-induced photochemical processes of PSII. PSII is a light-driven water:plastoquinone oxidoreductase, using light energy to abstract electrons from H(2)O, generating O(2) and a proton gradient subsequently used for ATP formation. The protein is Photosystem II CP47 reaction center protein of Populus deltoides (Eastern poplar).